We begin with the raw amino-acid sequence, 574 residues long: C6 finger transcription factor poxB (574 aa).

The zn(2)-C6 fungal-type DNA-binding region spans 19 to 51 (CDRCRGQKLRCERPVSNSSTTPCRRCLKAHVRC). Disordered regions lie at residues 111–133 (PRRLSHSSSMANPVDSRPPGRTR), 242–262 (SSLQSSRGLNGFETPQRESRH), and 376–404 (LNQTGSHAPSSPLGGNPLPPLSGPLSASA).

The protein localises to the nucleus. Functionally, transcription factor that positively regulates the expression of the gene cluster that mediates the biosynthesis of oxaleimides, cytotoxic compounds containing an unusual disubstituted succinimide moiety. The polypeptide is C6 finger transcription factor poxB (Penicillium oxalicum).